Reading from the N-terminus, the 669-residue chain is Cell surface receptor daf-1 (669 aa).

An N-terminal signal peptide occupies residues 1–19; sequence MRIRHVVFCLLALVYGAET. Topologically, residues 20–170 are extracellular; that stretch reads SDDDLDERTN…APGPQQSSTW (151 aa). N-linked (GlcNAc...) asparagine glycosylation is found at Asn-49, Asn-79, Asn-133, and Asn-154. A helical transmembrane segment spans residues 171-191; the sequence is LILTILALLTFIVLLGIAIFL. Topologically, residues 192–669 are cytoplasmic; that stretch reads TRKSWEAKFD…NDDSSRPLLG (478 aa). Positions 262 to 292 constitute a GS domain; the sequence is NNMKDMLDVLEETSGSGMGPTTLHKLTIGGQ. The Protein kinase domain occupies 293 to 593; sequence IRLTGRVGSG…KRMDERQQLL (301 aa). ATP is bound by residues 299–307 and Lys-320; that span reads VGSGRFGNV. Catalysis depends on Asp-423, which acts as the Proton acceptor. Basic and acidic residues-rich tracts occupy residues 611–624 and 633–650; these read DRKI…KDES and VQKE…RETA. The segment at 611–669 is disordered; the sequence is DRKILGPQKPKDESPANGAPRIVQKEIDREDEQENWRETAKTPNGHISSNDDSSRPLLG. Positions 651 to 661 are enriched in polar residues; the sequence is KTPNGHISSND.

It belongs to the protein kinase superfamily. TKL Ser/Thr protein kinase family. TGFB receptor subfamily. In terms of assembly, may interact with daf-4 to regulate dauer larva development. Head and ventral nerve cord from embryos to adults. Expressed in many sensory neurons. Subset of head neurons show coexpression with daf-4 when dauer/nondauer decision is made. Also expressed in non-neuronal cells: membraneous sheath surrounding the distal end of the intestine and in the distal tip cell of the gonad.

The protein resides in the membrane. The enzyme catalyses L-threonyl-[receptor-protein] + ATP = O-phospho-L-threonyl-[receptor-protein] + ADP + H(+). It carries out the reaction L-seryl-[receptor-protein] + ATP = O-phospho-L-seryl-[receptor-protein] + ADP + H(+). Its function is as follows. Probably involved in a TGF-beta pathway. May be a receptor for TGF-beta-like ligand daf-7. Controls the decision of whether or not larvae enter a developmentally arrested state, known as dauer, in response to environmental conditions. Involved in regulating entry into quiescence triggered by satiety. Involved in sensitivity to CO2 levels. In AWC neurons, acts to promote expression of srsx-3, a member of the GPCR family. The sequence is that of Cell surface receptor daf-1 (daf-1) from Caenorhabditis elegans.